The following is a 260-amino-acid chain: Small ribosomal subunit protein eS1 (260 aa).

The span at 1-18 (MAVGKNKRISKGKKGGKK) shows a compositional bias: basic residues. A disordered region spans residues 1–22 (MAVGKNKRISKGKKGGKKKAAD).

Belongs to the eukaryotic ribosomal protein eS1 family. As to quaternary structure, component of the small ribosomal subunit. Mature ribosomes consist of a small (40S) and a large (60S) subunit. The 40S subunit contains about 33 different proteins and 1 molecule of RNA (18S). The 60S subunit contains about 49 different proteins and 3 molecules of RNA (25S, 5.8S and 5S).

It is found in the cytoplasm. The polypeptide is Small ribosomal subunit protein eS1 (Helianthus annuus (Common sunflower)).